Reading from the N-terminus, the 350-residue chain is Uroporphyrinogen decarboxylase (350 aa).

Substrate is bound by residues 23 to 27 (RQAGR), aspartate 73, tyrosine 150, threonine 205, and histidine 322.

Belongs to the uroporphyrinogen decarboxylase family. Homodimer.

It is found in the cytoplasm. It catalyses the reaction uroporphyrinogen III + 4 H(+) = coproporphyrinogen III + 4 CO2. It functions in the pathway porphyrin-containing compound metabolism; protoporphyrin-IX biosynthesis; coproporphyrinogen-III from 5-aminolevulinate: step 4/4. Functionally, catalyzes the decarboxylation of four acetate groups of uroporphyrinogen-III to yield coproporphyrinogen-III. This chain is Uroporphyrinogen decarboxylase, found in Methylococcus capsulatus (strain ATCC 33009 / NCIMB 11132 / Bath).